A 401-amino-acid chain; its full sequence is Homeobox protein engrailed-1 (401 aa).

4 disordered regions span residues 1–102 (MEEQ…PAAQ), 138–167 (GGGA…HSLG), 229–253 (SKPS…AKFP), and 293–315 (RPSS…DKRP). Over residues 13-48 (DSGLGAVAAAAPSGLSLSLSPGASGSSGSDGDSVPV) the composition is skewed to low complexity. 2 stretches are compositionally biased toward pro residues: residues 49–64 (SPQP…PCLP) and 73–88 (PPHP…PPPQ). Residues 89-102 (HLAAPAHQPQPAAQ) are compositionally biased toward low complexity. Gly residues-rich tracts occupy residues 138-147 (GGGAAAGGGS) and 234-243 (SGGGSGGNAG). Residues 312–371 (DKRPRTAFTAEQLQRLKAEFQANRYITEQRRQTLAQELSLNESQIKIWFQNKRAKIKKAT) constitute a DNA-binding region (homeobox).

This sequence belongs to the engrailed homeobox family.

Its subcellular location is the nucleus. Its function is as follows. Required for proper formation of the apical ectodermal ridge and correct dorsal-ventral patterning in the limb. The sequence is that of Homeobox protein engrailed-1 (En1) from Mus musculus (Mouse).